The chain runs to 378 residues: Succinyl-diaminopimelate desuccinylase (378 aa).

Residue His66 participates in Zn(2+) binding. The active site involves Asp68. Asp100 contacts Zn(2+). Catalysis depends on Glu134, which acts as the Proton acceptor. Residues Glu135, Glu163, and His350 each coordinate Zn(2+).

This sequence belongs to the peptidase M20A family. DapE subfamily. In terms of assembly, homodimer. It depends on Zn(2+) as a cofactor. The cofactor is Co(2+).

It carries out the reaction N-succinyl-(2S,6S)-2,6-diaminopimelate + H2O = (2S,6S)-2,6-diaminopimelate + succinate. Its pathway is amino-acid biosynthesis; L-lysine biosynthesis via DAP pathway; LL-2,6-diaminopimelate from (S)-tetrahydrodipicolinate (succinylase route): step 3/3. In terms of biological role, catalyzes the hydrolysis of N-succinyl-L,L-diaminopimelic acid (SDAP), forming succinate and LL-2,6-diaminopimelate (DAP), an intermediate involved in the bacterial biosynthesis of lysine and meso-diaminopimelic acid, an essential component of bacterial cell walls. The sequence is that of Succinyl-diaminopimelate desuccinylase from Hydrogenovibrio crunogenus (strain DSM 25203 / XCL-2) (Thiomicrospira crunogena).